The sequence spans 502 residues: Na(+)/H(+) antiporter NhaB (502 aa).

Transmembrane regions (helical) follow at residues 27–49 (AFLV…VLIL), 66–86 (PGGL…ESVF), 95–115 (VILL…LLLY), 128–148 (IVLS…LDAL), 149–169 (TVTA…HQFA), 241–261 (FFLQ…VTCI), 299–318 (IAAL…SLAL), 350–370 (FEEA…VAVI), 394–414 (MFFI…VATV), 450–470 (ATPN…APLI), and 477–497 (MVLM…IAVY).

This sequence belongs to the NhaB Na(+)/H(+) (TC 2.A.34) antiporter family.

The protein localises to the cell inner membrane. It catalyses the reaction 2 Na(+)(in) + 3 H(+)(out) = 2 Na(+)(out) + 3 H(+)(in). Its function is as follows. Na(+)/H(+) antiporter that extrudes sodium in exchange for external protons. The chain is Na(+)/H(+) antiporter NhaB from Teredinibacter turnerae (strain ATCC 39867 / T7901).